Here is a 1382-residue protein sequence, read N- to C-terminus: MKAPAVLAPGILVLLFTLVPRSHGECKEALVKSEMNVNMKYQLPNFTAETPIQNVLLHQHHVYLGAINHIYVLNDKDLQKVAEYTTGPVLEHPDCLPCQDCSSKANSSGAVWKDNINLALLVDKYYDDQLISCGSVNRGTCQRHVLPPDNPADIQSGVYCMFSPQADEEPGQCPDCVVSPLGAKVLLSKKQRFIYFFVGNTINSSYLPDHSLHSISVRRLKETQDGFKFLTDQSYIDVLPEFRDSYPIKYVHAFESNHFIYFLTVQKETLDAQTFHTRIIRFCSKDSGLHSYMEMPLECILTEKRRKRATREEVFNILQAAYVSKPGAHLARQIGATPNDDILYGVFAQSKPDSAEPMNRSAVCAFPIKYINEFFNKIVNKNNVKCLQHFYGPNHEHCFNRTLLRNSSDCEARSDEYRTELTTALQRVDLFMGQFNQVLLTSISTFIKGDLTIANLGTSEGRFMQVVISRTILNVPHVNFRLDSHPVSPEVVVEHPLNQNGYTLVVTGNKITKIPLNGLGCGHFQSCSQCLSAPPFVQCGWCHDKCVPSEECPSGTWTQEICLPAIYKVFPASAPLEGGTTLTICGWDFGFRKNNKFDLKKTKVLLGNESCALNLSESTTNTLKCTVGATTHEHFNMSITVSNSRGRTQYSTFSYVAPVITSISPSYGPKAGGTLLTLTGKYLDSGNSRHISIGGKTCTLKSMSNSILECYTPAQTISTEFPVKLEIDLASRETSSFSYREDPIVDEFYPTKSFISGGSTITGVGKNLDSVSVPRMVISVHEAGSNFTVACQHRSNSEIICCTTPSLQQLNLHLPLKTKAFFMLDGILSKHFDLTYVHNPVFKPFEKPVMISMGNENVLEIKGNDIDPEAVKGEVLKVGNKSCENIHSDSEAVLCTVPNDLLKLNSELNIEWKQAVSSTVLGKVIVQPDQNFMGLIVGGVSISIILLLLLGLFLWLKKKKRIKDLGSELVRYDARVHTPHLDRLVSARSVSPTTEMVSNESVDYRATFPEDQFPNSSQNGSCRQVQYPLTDLSPILTSGDSDISSPLLQNTVHIDLSALNPELVQAVQHVVIGPSSLIVHFSEVIGRGHFGCVYHGTLLDNDGKKIHCAVKSLNRITDIGEVSQFLTEGIIMKDFSHPNVLSLLGICLRSEGSPLVVLPYMKHGDLRNFIRNETHNPTVKDLIGFGLQVAKGMKYLASKKFVHRDLAARNCMLDEKFTVKVADFGLARDMYDKEYYSVHNKTGAKLPVKWMALESLQTQKFTTKSDVWSFGVLLWELMTRGAPPYPDVNTFDITVYLLQGRRLLQPEYCPDALYEVMLKCWHPKAEMRPSFSELVSRISTIFSTFIGEHYVHVNATYVNVKCVAPYPSLLSSQDNVDGTVDT.

Positions 1-24 (MKAPAVLAPGILVLLFTLVPRSHG) are cleaved as a signal peptide. Topologically, residues 25-933 (ECKEALVKSE…VIVQPDQNFM (909 aa)) are extracellular. The Sema domain occupies 27 to 516 (KEALVKSEMN…TGNKITKIPL (490 aa)). N-linked (GlcNAc...) asparagine glycosylation occurs at N45. 4 disulfides stabilise this stretch: C95/C101, C98/C160, C133/C141, and C173/C176. An N-linked (GlcNAc...) asparagine glycan is attached at N106. N203 and N359 each carry an N-linked (GlcNAc...) asparagine glycan. Disulfide bonds link C299/C364 and C386/C398. N-linked (GlcNAc...) asparagine glycosylation is found at N400 and N406. Intrachain disulfides connect C521-C539, C527-C562, C530-C546, and C542-C552. 3 IPT/TIG domains span residues 564 to 656 (PAIY…FSYV), 658 to 740 (PVIT…FSYR), and 743 to 837 (PIVD…LTYV). T583 carries O-linked (Man) threonine glycosylation. N-linked (GlcNAc...) asparagine glycans are attached at residues N608, N614, and N636. T677 and T762 each carry an O-linked (Man) threonine glycan. 2 N-linked (GlcNAc...) asparagine glycosylation sites follow: N786 and N880. The helical transmembrane segment at 934-956 (GLIVGGVSISIILLLLLGLFLWL) threads the bilayer. Topologically, residues 957-1382 (KKKKRIKDLG…QDNVDGTVDT (426 aa)) are cytoplasmic. S967 carries the post-translational modification Phosphoserine. T978 bears the Phosphothreonine mark. 3 positions are modified to phosphoserine: S991, S998, and S1001. At Y1004 the chain carries Phosphotyrosine. Residues 1079–1346 (VHFSEVIGRG…RISTIFSTFI (268 aa)) form the Protein kinase domain. ATP-binding positions include 1085–1093 (IGRGHFGCV) and K1111. Residue D1205 is the Proton acceptor of the active site. An interaction with RANBP9 region spans residues 1213-1382 (LDEKFTVKVA…QDNVDGTVDT (170 aa)). Y1231 bears the Phosphotyrosine mark. A phosphotyrosine; by autocatalysis mark is found at Y1235 and Y1236. T1290 bears the Phosphothreonine mark. The interaction with MUC20 stretch occupies residues 1321-1360 (WHPKAEMRPSFSELVSRISTIFSTFIGEHYVHVNATYVNV). Y1350 and Y1357 each carry phosphotyrosine; by autocatalysis. Position 1366 is a phosphotyrosine (Y1366).

The protein belongs to the protein kinase superfamily. Tyr protein kinase family. In terms of assembly, heterodimer made of an alpha chain (50 kDa) and a beta chain (145 kDa) which are disulfide linked. Binds PLXNB1. Interacts when phosphorylated with downstream effectors including STAT3, PIK3R1, SRC, PCLG1, GRB2 and GAB1. Interacts with SPSB1, SPSB2 and SPSB4. Interacts with INPP5D/SHIP1. When phosphorylated at Tyr-1357, interacts with INPPL1/SHIP2. Interacts with RANBP9 and RANBP10, as well as SPSB1, SPSB2, SPSB3 and SPSB4. SPSB1 binding occurs in the presence and in the absence of HGF, however HGF treatment has a positive effect on this interaction. Interacts with MUC20; prevents interaction with GRB2 and suppresses hepatocyte growth factor-induced cell proliferation. Interacts with GRB10. Interacts with PTPN1 and PTPN2. Interacts with HSP90AA1 and HSP90AB1; the interaction suppresses MET kinase activity. Interacts with tensin TNS3. Interacts (when phosphorylated) with tensin TNS4 (via SH2 domain); the interaction increases MET protein stability by inhibiting MET endocytosis and subsequent lysosomal degradation. Post-translationally, autophosphorylated in response to ligand binding on Tyr-1235 and Tyr-1236 in the kinase domain leading to further phosphorylation of Tyr-1350 and Tyr-1357 in the C-terminal multifunctional docking site. Dephosphorylated by PTPRJ at Tyr-1350 and Tyr-1366. Dephosphorylated by PTPN1 and PTPN2. Ubiquitinated. Ubiquitination by CBL regulates the receptor stability and activity through proteasomal degradation. In terms of processing, O-mannosylation of IPT/TIG domains by TMEM260 is required for protein maturation. O-mannosylated residues are composed of single mannose glycans that are not elongated or modified.

It is found in the membrane. The enzyme catalyses L-tyrosyl-[protein] + ATP = O-phospho-L-tyrosyl-[protein] + ADP + H(+). Its activity is regulated as follows. In its inactive state, the C-terminal tail interacts with the catalytic domain and inhibits the kinase activity. Upon ligand binding, the C-terminal tail is displaced and becomes phosphorylated, thus increasing the kinase activity. Functionally, receptor tyrosine kinase that transduces signals from the extracellular matrix into the cytoplasm by binding to hepatocyte growth factor/HGF ligand. Regulates many physiological processes including proliferation, scattering, morphogenesis and survival. Ligand binding at the cell surface induces autophosphorylation of MET on its intracellular domain that provides docking sites for downstream signaling molecules. Following activation by ligand, interacts with the PI3-kinase subunit PIK3R1, PLCG1, SRC, GRB2, STAT3 or the adapter GAB1. Recruitment of these downstream effectors by MET leads to the activation of several signaling cascades including the RAS-ERK, PI3 kinase-AKT, or PLCgamma-PKC. The RAS-ERK activation is associated with the morphogenetic effects while PI3K/AKT coordinates prosurvival effects. During embryonic development, MET signaling plays a role in gastrulation, development and migration of muscles and neuronal precursors, angiogenesis and kidney formation. In adults, participates in wound healing as well as organ regeneration and tissue remodeling. Also promotes differentiation and proliferation of hematopoietic cells. In Oryctolagus cuniculus (Rabbit), this protein is Hepatocyte growth factor receptor (MET).